A 263-amino-acid chain; its full sequence is 4-hydroxy-tetrahydrodipicolinate reductase (263 aa).

NAD(+) is bound by residues 8-13 (GACGRM), aspartate 34, 99-101 (GTT), and 125-128 (SPNY). Residue histidine 157 is the Proton donor/acceptor of the active site. A (S)-2,3,4,5-tetrahydrodipicolinate-binding site is contributed by histidine 158. Lysine 161 (proton donor) is an active-site residue. A (S)-2,3,4,5-tetrahydrodipicolinate-binding site is contributed by 167–168 (GT).

Belongs to the DapB family.

It localises to the cytoplasm. The catalysed reaction is (S)-2,3,4,5-tetrahydrodipicolinate + NAD(+) + H2O = (2S,4S)-4-hydroxy-2,3,4,5-tetrahydrodipicolinate + NADH + H(+). It catalyses the reaction (S)-2,3,4,5-tetrahydrodipicolinate + NADP(+) + H2O = (2S,4S)-4-hydroxy-2,3,4,5-tetrahydrodipicolinate + NADPH + H(+). The protein operates within amino-acid biosynthesis; L-lysine biosynthesis via DAP pathway; (S)-tetrahydrodipicolinate from L-aspartate: step 4/4. Its function is as follows. Catalyzes the conversion of 4-hydroxy-tetrahydrodipicolinate (HTPA) to tetrahydrodipicolinate. This Methanosarcina barkeri (strain Fusaro / DSM 804) protein is 4-hydroxy-tetrahydrodipicolinate reductase.